Reading from the N-terminus, the 111-residue chain is Protein IDA-LIKE 5 (111 aa).

An N-terminal signal peptide occupies residues 1 to 27 (MGNKRIKAMMILVVMIMMVFSWRICEA). Positions 46-56 (RRPNPRNHHHQ) are enriched in basic residues. The disordered stretch occupies residues 46–65 (RRPNPRNHHHQNQGFNGDDY).

In terms of tissue distribution, expressed mainly in flowers. Lower levels in buds and seedlings. Detected in vascular tissues and in hydathodes.

Its subcellular location is the secreted. It is found in the extracellular space. In terms of biological role, may be involved in floral abscission. This chain is Protein IDA-LIKE 5 (IDL5), found in Arabidopsis thaliana (Mouse-ear cress).